We begin with the raw amino-acid sequence, 426 residues long: Glutamate-1-semialdehyde 2,1-aminomutase (426 aa).

Lys266 bears the N6-(pyridoxal phosphate)lysine mark.

The protein belongs to the class-III pyridoxal-phosphate-dependent aminotransferase family. HemL subfamily. Requires pyridoxal 5'-phosphate as cofactor.

It localises to the cytoplasm. It carries out the reaction (S)-4-amino-5-oxopentanoate = 5-aminolevulinate. It participates in porphyrin-containing compound metabolism; protoporphyrin-IX biosynthesis; 5-aminolevulinate from L-glutamyl-tRNA(Glu): step 2/2. The chain is Glutamate-1-semialdehyde 2,1-aminomutase (hemL) from Methanocaldococcus jannaschii (strain ATCC 43067 / DSM 2661 / JAL-1 / JCM 10045 / NBRC 100440) (Methanococcus jannaschii).